Reading from the N-terminus, the 77-residue chain is Acyl carrier protein (77 aa).

Residues 2-77 (STVEERVKKI…DAIDYIVAHT (76 aa)) enclose the Carrier domain. Position 37 is an O-(pantetheine 4'-phosphoryl)serine (serine 37).

The protein belongs to the acyl carrier protein (ACP) family. In terms of processing, 4'-phosphopantetheine is transferred from CoA to a specific serine of apo-ACP by AcpS. This modification is essential for activity because fatty acids are bound in thioester linkage to the sulfhydryl of the prosthetic group.

It is found in the cytoplasm. It functions in the pathway lipid metabolism; fatty acid biosynthesis. Carrier of the growing fatty acid chain in fatty acid biosynthesis. The protein is Acyl carrier protein of Marinobacter nauticus (strain ATCC 700491 / DSM 11845 / VT8) (Marinobacter aquaeolei).